The primary structure comprises 324 residues: Aspartate carbamoyltransferase catalytic subunit (324 aa).

Carbamoyl phosphate contacts are provided by R65 and T66. K93 provides a ligand contact to L-aspartate. Carbamoyl phosphate-binding residues include R115, H145, and Q148. Positions 178 and 233 each coordinate L-aspartate. Carbamoyl phosphate-binding residues include G274 and P275.

It belongs to the aspartate/ornithine carbamoyltransferase superfamily. ATCase family. In terms of assembly, heterododecamer (2C3:3R2) of six catalytic PyrB chains organized as two trimers (C3), and six regulatory PyrI chains organized as three dimers (R2).

The enzyme catalyses carbamoyl phosphate + L-aspartate = N-carbamoyl-L-aspartate + phosphate + H(+). Its pathway is pyrimidine metabolism; UMP biosynthesis via de novo pathway; (S)-dihydroorotate from bicarbonate: step 2/3. In terms of biological role, catalyzes the condensation of carbamoyl phosphate and aspartate to form carbamoyl aspartate and inorganic phosphate, the committed step in the de novo pyrimidine nucleotide biosynthesis pathway. The polypeptide is Aspartate carbamoyltransferase catalytic subunit (Nitrosococcus oceani (strain ATCC 19707 / BCRC 17464 / JCM 30415 / NCIMB 11848 / C-107)).